The primary structure comprises 229 residues: Synaptogyrin-3 (229 aa).

Met-1 bears the N-acetylmethionine mark. An MARVEL domain is found at 20–172; sequence FARRPQTLLR…LTVKALQRFR (153 aa). The next 4 membrane-spanning stretches (helical) occupy residues 30 to 50, 70 to 90, 105 to 125, and 148 to 168; these read VVSWVFSIAVFGPIVNEGYVN, FGVVLGLGAFIACVAFLLLDV, VLLDLGFSGVWSFLWFVGFCF, and AAIAFSFFSILSWVALTVKAL. Positions 209 to 223 are enriched in polar residues; the sequence is QSPPFTETLDTSSKG. A disordered region spans residues 209 to 229; that stretch reads QSPPFTETLDTSSKGYQVPAY.

Belongs to the synaptogyrin family. In terms of assembly, interacts (via N-terminus) with SLC6A3 (via N-terminus). May interact with VMAT2. Specifically expressed in brain. Found in the brain across the dorsal and ventral corpus striatum as well as in the cortex.

The protein resides in the cytoplasmic vesicle. It is found in the secretory vesicle. It localises to the synaptic vesicle membrane. The protein localises to the synapse. In terms of biological role, may play a role in regulated exocytosis. May indirectly regulate the activity of the plasma membrane dopamine transporter SLC6A3 and thereby regulate dopamine transport back from the synaptic cleft into the presynaptic terminal. The chain is Synaptogyrin-3 from Mus musculus (Mouse).